The primary structure comprises 363 residues: 4-hydroxy-2-oxovalerate aldolase 1 (363 aa).

The 253-residue stretch at 13 to 265 folds into the Pyruvate carboxyltransferase domain; sequence VRMTDTSLRD…KTGIDFFDIA (253 aa). 21–22 is a binding site for substrate; the sequence is RD. Asp-22 is a Mn(2+) binding site. Catalysis depends on His-25, which acts as the Proton acceptor. 2 residues coordinate substrate: Ser-175 and His-204. Residues His-204 and His-206 each contribute to the Mn(2+) site. Tyr-295 provides a ligand contact to substrate.

It belongs to the 4-hydroxy-2-oxovalerate aldolase family.

It carries out the reaction (S)-4-hydroxy-2-oxopentanoate = acetaldehyde + pyruvate. The protein is 4-hydroxy-2-oxovalerate aldolase 1 of Mycobacterium sp. (strain JLS).